A 297-amino-acid polypeptide reads, in one-letter code: uncharacterized protein (297 aa).

The tract at residues 136–174 (FSETNDDSTDEEIDTPINDDDDDDKNNDADNNDINEDNK) is disordered. The span at 139–170 (TNDDSTDEEIDTPINDDDDDDKNNDADNNDIN) shows a compositional bias: acidic residues.

This sequence to S.pombe SpBC725.03.

This is an uncharacterized protein from Saccharomyces cerevisiae (strain ATCC 204508 / S288c) (Baker's yeast).